Reading from the N-terminus, the 305-residue chain is Dermonecrotic toxin LiSicTox-alphaIA2aiii (305 aa).

The signal sequence occupies residues 1-17; it reads LPYIALILVCWSVLSQA. Positions 18 to 25 are excised as a propeptide; sequence AQTDVEER. Residue histidine 37 is part of the active site. Mg(2+) is bound by residues glutamate 57 and aspartate 59. The active-site Nucleophile is histidine 73. Cystine bridges form between cysteine 77–cysteine 83 and cysteine 79–cysteine 222. A Mg(2+)-binding site is contributed by aspartate 117. Asparagine 282 carries N-linked (GlcNAc...) asparagine glycosylation.

The protein belongs to the arthropod phospholipase D family. Class II subfamily. The cofactor is Mg(2+). Expressed by the venom gland.

Its subcellular location is the secreted. It catalyses the reaction an N-(acyl)-sphingosylphosphocholine = an N-(acyl)-sphingosyl-1,3-cyclic phosphate + choline. It carries out the reaction an N-(acyl)-sphingosylphosphoethanolamine = an N-(acyl)-sphingosyl-1,3-cyclic phosphate + ethanolamine. The enzyme catalyses a 1-acyl-sn-glycero-3-phosphocholine = a 1-acyl-sn-glycero-2,3-cyclic phosphate + choline. The catalysed reaction is a 1-acyl-sn-glycero-3-phosphoethanolamine = a 1-acyl-sn-glycero-2,3-cyclic phosphate + ethanolamine. Dermonecrotic toxins cleave the phosphodiester linkage between the phosphate and headgroup of certain phospholipids (sphingolipid and lysolipid substrates), forming an alcohol (often choline) and a cyclic phosphate. This toxin acts on sphingomyelin (SM). It may also act on ceramide phosphoethanolamine (CPE), lysophosphatidylcholine (LPC) and lysophosphatidylethanolamine (LPE), but not on lysophosphatidylserine (LPS), and lysophosphatidylglycerol (LPG). It acts by transphosphatidylation, releasing exclusively cyclic phosphate products as second products. Induces dermonecrosis, hemolysis, increased vascular permeability, edema, inflammatory response, and platelet aggregation. This chain is Dermonecrotic toxin LiSicTox-alphaIA2aiii, found in Loxosceles intermedia (Brown spider).